An 898-amino-acid chain; its full sequence is Sodium/hydrogen exchanger 5 (898 aa).

At 1–3 the chain is on the cytoplasmic side; it reads MLR. The helical transmembrane segment at 4–24 threads the bilayer; that stretch reads VALLLLPGLPLAGVGATEEPT. Over 25–47 the chain is Extracellular; it reads QEPGPLGEPPGLALFRWQWHEVE. Residues 48–68 form a helical membrane-spanning segment; that stretch reads APYLVALWILVASLAKIVFHL. Residues 69–75 lie on the Cytoplasmic side of the membrane; it reads SRKVTSL. The helical transmembrane segment at 76–96 threads the bilayer; sequence VPESCLLILLGLALGGIVLAV. Over 97–136 the chain is Extracellular; sequence AKKAEYQLEPGTFFLFLLPPIVLDSGYFMPSRLFFDNLGA. The chain crosses the membrane as a helical span at residues 137–157; the sequence is ILTYAVVGTLWNAFTTGVALW. The Cytoplasmic portion of the chain corresponds to 158–175; that stretch reads GLQQAGLVAPRVQAGLLD. The helical transmembrane segment at 176 to 196 threads the bilayer; it reads FLLFGSLISAVDPVAVLAVFE. Residues 197-202 lie on the Extracellular side of the membrane; sequence EVHVNE. An N-linked (GlcNAc...) asparagine glycan is attached at asparagine 201. The helical transmembrane segment at 203-223 threads the bilayer; sequence TLFIIVFGESLLNDAVTVVLY. Residues 224–248 lie on the Cytoplasmic side of the membrane; the sequence is KVCNSFVEMGSANVQATDYLKGVAS. The helical transmembrane segment at 249-269 threads the bilayer; the sequence is LFVVSLGGAAVGLVFAFLLAL. Over 270 to 278 the chain is Extracellular; it reads TTRFTKRVR. The chain crosses the membrane as a helical span at residues 279-299; it reads IIEPLLVFLLAYAAYLTAEMA. Residues 300–333 are Cytoplasmic-facing; sequence SLSAILAVTMCGLGCKKYVEANISHKSRTAVKYT. Residues 334–354 form a helical membrane-spanning segment; it reads MKTLASSAETVIFMLLGISAV. Topologically, residues 355-362 are extracellular; the sequence is DSSKWAWD. A helical transmembrane segment spans residues 363-383; sequence SGLVLGTLFFILFFRALGVVL. Over 384–400 the chain is Cytoplasmic; that stretch reads QTWVLNQFRLVPLDKID. The helical transmembrane segment at 401–421 threads the bilayer; the sequence is QVVMSYGGLRGAVAFALVILL. The Extracellular segment spans residues 422–430; it reads DRTKVPAKD. The helical transmembrane segment at 431–451 threads the bilayer; it reads YFVATTIVVVFFTVIVQGLTI. Over 452 to 898 the chain is Cytoplasmic; the sequence is KPLVKWLRVK…CIQFNRGGRL (447 aa). Disordered stretches follow at residues 660–692 and 801–888; these read TKSK…RDLG and ESLA…NSHW. Positions 662 to 674 are enriched in basic residues; it reads SKPRPRKTGHKKK. The segment covering 856-867 has biased composition (polar residues); the sequence is ESSADIPQQQEL.

It belongs to the monovalent cation:proton antiporter 1 (CPA1) transporter (TC 2.A.36) family. In terms of assembly, interacts with CHP1 and CHP2. Interacts with ARRB2; facilitates the endocytosis of SLC9A5 from the plasma membrane. Interacts with RACK1; this interaction positively regulates SLC9A5 activity and promotes SLC9A5 localization to focal adhesions. Interacts with SCAMP2; this interaction regulates SLC9A5 cell-surface targeting and SLC9A5 activity. Phosphorylated by PRKAA2; promotes its accumulation at the cell surface. Phosphorylated by CSNK2A1 in a manner favoring its beta-arrestin binding and endocytosis. Highly expressed in brain. Strongly expressed in the dentate gyrus.

It localises to the cell membrane. The protein resides in the recycling endosome membrane. The protein localises to the cell projection. It is found in the dendritic spine membrane. Its subcellular location is the synaptic cell membrane. It localises to the cell junction. The protein resides in the focal adhesion. It catalyses the reaction Na(+)(in) + H(+)(out) = Na(+)(out) + H(+)(in). Its function is as follows. Plasma membrane Na(+)/H(+) antiporter. Mediates the electroneutral exchange of intracellular H(+) ions for extracellular Na(+) in 1:1 stoichiometry. Responsible for regulating intracellular pH homeostasis, in particular in neural tissues. Acts as a negative regulator of dendritic spine growth. Plays a role in postsynaptic remodeling and signaling. Can also contribute to organellar pH regulation, with consequences for receptor tyrosine kinase trafficking. The protein is Sodium/hydrogen exchanger 5 (Slc9a5) of Rattus norvegicus (Rat).